Consider the following 323-residue polypeptide: Fatty acid desaturase 4, chloroplastic (323 aa).

The transit peptide at 1–77 directs the protein to the chloroplast; that stretch reads MAVSLPTKYP…PRPNREKLVV (77 aa). The next 2 helical transmembrane spans lie at 101 to 121 and 131 to 151; these read WVAA…IGGF and LAGY…HWAI. The short motif at 170-173 is the Histidine box-1 element; it reads QGHH. The helical transmembrane segment at 204–224 threads the bilayer; the sequence is LAFNDPVFHGFVCTFAFCILF. Positions 229–233 match the Histidine box-2 motif; it reads HAWAH. Positions 258–262 match the Histidine box-3 motif; the sequence is HAEHH.

It belongs to the fatty acid desaturase CarF family. Fe(2+) serves as cofactor.

Its subcellular location is the plastid. It is found in the chloroplast membrane. The enzyme catalyses a 1-acyl-2-hexadecanoyl-glycerolipid + 2 reduced [2Fe-2S]-[ferredoxin] + O2 + 2 H(+) = a 1-acyl-2-[(3E)-hexadec-3-enoyl]-glycerolipid + 2 oxidized [2Fe-2S]-[ferredoxin] + 2 H2O. Its pathway is lipid metabolism; fatty acid metabolism. Its function is as follows. Fatty acid desaturase involved in the production of chloroplast-specific phosphatidylglycerol molecular species containing 16:1(3E). Catalyzes the formation of a trans double bond introduced close to the carboxyl group of palmitic acid, which is specifically esterified to the sn-2 glyceryl carbon of phosphatidylglycerol. This is Fatty acid desaturase 4, chloroplastic from Arabidopsis thaliana (Mouse-ear cress).